Reading from the N-terminus, the 484-residue chain is UDP-N-acetylmuramate--L-alanine ligase (484 aa).

127-133 (GTHGKTT) serves as a coordination point for ATP.

It belongs to the MurCDEF family.

Its subcellular location is the cytoplasm. It carries out the reaction UDP-N-acetyl-alpha-D-muramate + L-alanine + ATP = UDP-N-acetyl-alpha-D-muramoyl-L-alanine + ADP + phosphate + H(+). It functions in the pathway cell wall biogenesis; peptidoglycan biosynthesis. In terms of biological role, cell wall formation. The protein is UDP-N-acetylmuramate--L-alanine ligase of Shewanella amazonensis (strain ATCC BAA-1098 / SB2B).